A 624-amino-acid polypeptide reads, in one-letter code: Polycystin-2-like protein 2 (624 aa).

Residues 1–31 (MAEASRWHRGGASKHKLHYRKEVEITTTLQE) are Cytoplasmic-facing. The chain crosses the membrane as a helical span at residues 32–52 (LLLYFIFLINLCILTFGMVNP). Over 53–276 (HMYYLNKVMS…YSVKLLRYVS (224 aa)) the chain is Extracellular. 2 N-linked (GlcNAc...) asparagine glycosylation sites follow: Asn115 and Asn138. Residues 277 to 297 (YYDYFIASCEITFCIFLFVFT) form a helical membrane-spanning segment. The Cytoplasmic segment spans residues 298–314 (TQEVKKIKEFKSAYFKS). A helical membrane pass occupies residues 315–335 (IWNWLELLLLLLCFVAVSFNT). Residues 336 to 360 (YYNVQIFLLLGQLLKSTEKYSDFYF) lie on the Extracellular side of the membrane. Residues 361 to 381 (LACWHIYYNNIIAITIFFAWI) traverse the membrane as a helical segment. The Cytoplasmic portion of the chain corresponds to 382 to 406 (KIFKFISFNKTMSQLSSTLSRCVKD). Residues 407–427 (IVGFAIMFFIIFFAYAQLGFL) traverse the membrane as a helical segment. Residues 428–469 (VFGSQVDDFSTFQNSIFAQFRIVLGDFNFAGIQQANPILGPI) lie on the Extracellular side of the membrane. A helical transmembrane segment spans residues 470-490 (YFITFIFFVFFVLLNMFLAII). The Cytoplasmic portion of the chain corresponds to 491–624 (NDTYSEVKAD…NQVVRKVSAL (134 aa)). Positions 556–576 (ENEIQNAEQMKKWKERLEKKY) form a coiled coil.

The protein belongs to the polycystin family. As to quaternary structure, interacts with TRPC1 and TRPC5. In terms of tissue distribution, expressed only in testis. Expressed also in brain and kidney. Expressed only in transformed lymphoblasts.

It is found in the membrane. In terms of biological role, exhibits a lower single conductance but no spontaneous channel activity. May function as a regulator of calcium channels or a channel component involving Ca2(+) homeostasis. The polypeptide is Polycystin-2-like protein 2 (Homo sapiens (Human)).